We begin with the raw amino-acid sequence, 114 residues long: uncharacterized protein (114 aa).

Positions Met1–Glu20 are enriched in basic and acidic residues. Positions Met1–Gln22 are disordered.

May be involved in phosphatase regulation and/or generation of precursor metabolites and energy. This is an uncharacterized protein from Saccharomyces cerevisiae (strain ATCC 204508 / S288c) (Baker's yeast).